We begin with the raw amino-acid sequence, 1605 residues long: Sister chromatid cohesion protein PDS5 homolog A (1605 aa).

HEAT repeat units lie at residues K50 to P89, N96 to C136, D146 to E183, D184 to P221, Q261 to R298, E302 to L339, A341 to T378, I380 to L416, A552 to F591, S644 to E681, K723 to P758, A821 to A860, L961 to L1000, and H1050 to E1088. Disordered stretches follow at residues L1155–V1182 and E1203–Q1262. Residues S1211 to G1225 are compositionally biased toward basic and acidic residues. A Nuclear localization signal 1 motif is present at residues N1226 to A1233. At S1274 the chain carries Phosphoserine. Residues N1279 to L1295 are compositionally biased toward basic and acidic residues. Disordered stretches follow at residues N1279 to L1307, E1324 to A1353, and G1423 to I1605. S1299 carries the post-translational modification Phosphoserine. Basic residues-rich tracts occupy residues T1425–S1442 and K1464–L1476. A Nuclear localization signal 2 motif is present at residues A1426–K1433. Basic and acidic residues-rich tracts occupy residues H1477–R1495, G1514–E1527, and V1534–E1574. Phosphoserine occurs at positions 1524, 1562, and 1584. Acidic residues predominate over residues R1575 to D1585. T1588 carries the phosphothreonine modification.

It belongs to the PDS5 family. As to quaternary structure, interacts with the cohesin complex. Interacts with DEK3.

It is found in the nucleus. In terms of biological role, cohesin cofactor dispensable during the meiotic division but playing an important role in DNA repair by homologous recombination (HR) probably by helping SMC5/SMC6 complex. Regulator of sister chromatid cohesion in mitosis which may stabilize cohesin complex association with chromatin. May couple sister chromatid cohesion during mitosis to DNA replication. Cohesion ensures that chromosome partitioning is accurate in both meiotic and mitotic cells and plays an important role in DNA repair. This is Sister chromatid cohesion protein PDS5 homolog A from Arabidopsis thaliana (Mouse-ear cress).